The primary structure comprises 382 residues: Lipid-A-disaccharide synthase (382 aa).

This sequence belongs to the LpxB family.

The enzyme catalyses 2-N,3-O-bis[(3R)-3-hydroxytetradecanoyl]-alpha-D-glucosaminyl 1-phosphate + UDP-2-N,3-O-bis[(3R)-3-hydroxytetradecanoyl]-alpha-D-glucosamine = lipid A disaccharide (E. coli) + UDP + H(+). It carries out the reaction a lipid X + a UDP-2-N,3-O-bis[(3R)-3-hydroxyacyl]-alpha-D-glucosamine = a lipid A disaccharide + UDP + H(+). It functions in the pathway glycolipid biosynthesis; lipid IV(A) biosynthesis; lipid IV(A) from (3R)-3-hydroxytetradecanoyl-[acyl-carrier-protein] and UDP-N-acetyl-alpha-D-glucosamine: step 5/6. Functionally, condensation of UDP-2,3-diacylglucosamine and 2,3-diacylglucosamine-1-phosphate to form lipid A disaccharide, a precursor of lipid A, a phosphorylated glycolipid that anchors the lipopolysaccharide to the outer membrane of the cell. In Salmonella agona (strain SL483), this protein is Lipid-A-disaccharide synthase.